Reading from the N-terminus, the 660-residue chain is Zinc transporter ZIP4 (660 aa).

An N-terminal signal peptide occupies residues 1–22 (MLPKSVTQGLVLALLVGTVAVA). Topologically, residues 23–337 (RPRNLLSLLA…QDQLSQTERY (315 aa)) are extracellular. 3 disulfides stabilise this stretch: C56-C61, C64-C110, and C160-C195. Residues N192 and N219 are each glycosylated (N-linked (GlcNAc...) asparagine). The disordered stretch occupies residues 233–273 (GVGGEDHSDHDDHGDHADHSHPDRKASHQDSELHTPHNSNS). The segment covering 236–267 (GEDHSDHDDHGDHADHSHPDRKASHQDSELHT) has biased composition (basic and acidic residues). The N-linked (GlcNAc...) asparagine glycan is linked to N272. Residues C280 and C319 are joined by a disulfide bond. Residues 338–358 (LYGSLATLLICLCAVFGLLLL) form a helical membrane-spanning segment. Residues 359 to 376 (TCAKCSTATHYIMQTFLS) lie on the Cytoplasmic side of the membrane. A helical transmembrane segment spans residues 377 to 397 (LAVGALTGDALLHLIPKVLGL). The Extracellular portion of the chain corresponds to 398–420 (HTHGGEGHTHEEEVGVGGQATWR). The chain crosses the membrane as a helical span at residues 421 to 441 (LLAVLGGFYIFFLFESFFNLL). Topologically, residues 442 to 511 (LPRDQDSEKD…LRAELRLLPY (70 aa)) are cytoplasmic. The short motif at 465–467 (LQL) is the Essential for SLC39A4 endocytosis element. A helical membrane pass occupies residues 512–531 (LITLGDAVHNFADGLAVGAA). Zn(2+) contacts are provided by H520, N521, and D524. The Extracellular portion of the chain corresponds to 532–539 (FSSSWKTG). The chain crosses the membrane as a helical span at residues 540–566 (LATSLAVFCHELPHELGDFAALLHAGL). Zn(2+)-binding residues include H549, E550, and H553. At 567 to 571 (SVKRA) the chain is on the cytoplasmic side. A helical transmembrane segment spans residues 572-592 (LLLNLASALTAFAGLYVALAV). Over 593 to 599 (GVGEEGE) the chain is Extracellular. A helical membrane pass occupies residues 600–620 (AWILAVATGLFLYVALCDMLP). Topologically, residues 621–630 (AMMNVRDQRP) are cytoplasmic. A helical membrane pass occupies residues 631 to 651 (WLLFLLHNVGLLGGWTVLLLL). Over 652–660 (SLYEDNITF) the chain is Extracellular. N-linked (GlcNAc...) asparagine glycosylation is present at N657.

The protein belongs to the ZIP transporter (TC 2.A.5) family. In terms of assembly, homodimer. Homodimerization is mediated by the transmembrane domain. In terms of processing, the extracellular N-terminal ectodomain is cleaved when cells are Zn(2+) deficient, N-terminally cleaved SLC39A4 is then internalized faster. Post-translationally, under excess Zn(2+) conditions, SLC39A4 on the cell surface is rapidly endocytosed, ubiquitinated, and degraded. N-glycosylated. In terms of tissue distribution, highly expressed in the small intestine and embryonic visceral yolk sac. Weakly expressed in the stomach and liver.

Its subcellular location is the cell membrane. It is found in the recycling endosome membrane. The protein resides in the apical cell membrane. The enzyme catalyses Zn(2+)(in) = Zn(2+)(out). Selective transporter that mediates the uptake of Zn(2+). Plays an essential role for dietary zinc uptake from small intestine. The Zn(2+) uniporter activity is regulated by zinc availability. Also exhibits polyspecific binding and transport of Cu(2+), Cd(2+) and possibly Ni(2+) but at higher concentrations. This chain is Zinc transporter ZIP4 (Slc39a4), found in Mus musculus (Mouse).